A 494-amino-acid chain; its full sequence is Myocyte-specific enhancer factor 2A (494 aa).

In terms of domain architecture, MADS-box spans 3 to 57; that stretch reads RKKIQITRIMDERNRQVTFTKRKFGLMKKAYELSVLCDCEIALIIFNSSNKLFQY. Positions 58-86 form a DNA-binding region, mef2-type; sequence ASTDMDKVLLKYTEYNEPHESRTNSDIVE. Ser59 is modified (phosphoserine; by CK2). Phosphoserine is present on residues Ser98 and Ser108. A compositionally biased stretch (low complexity) spans 171-181; that stretch reads TLTDSSMLSPP. Residues 171–218 form a disordered region; it reads TLTDSSMLSPPQTTLHRNVSPGAPQRPPSTGNAGGMLSTTDLIVPNGA. Position 233 is a phosphoserine (Ser233). The tract at residues 238–268 is disordered; sequence GATGANSLGKVMPTKSPPPPGGGNLGMNSRK. Position 247 is an N6-acetyllysine (Lys247). The residue at position 253 (Ser253) is a Phosphoserine. A required for interaction with MAPKs region spans residues 264 to 281; it reads MNSRKPDLRVVIPPSSKG. 2 positions are modified to phosphothreonine; by MAPK7 and MAPK14: Thr302 and Thr309. Ser345 carries the post-translational modification Phosphoserine; by MAPK7. Over residues 380 to 392 the composition is skewed to polar residues; that stretch reads SNLSINTNQNINI. The tract at residues 380–494 is disordered; it reads SNLSINTNQN…KRMRMDAWVT (115 aa). Lys393 carries the post-translational modification N6-acetyllysine; alternate. Lys393 participates in a covalent cross-link: Glycyl lysine isopeptide (Lys-Gly) (interchain with G-Cter in SUMO); alternate. Ser398 carries the phosphoserine; by CDK5 modification. Thr405 is subject to Phosphothreonine. The segment covering 418-432 has biased composition (pro residues); it reads QPPPPPPQPQPPQPQ. The residue at position 440 (Ser440) is a Phosphoserine. Over residues 440 to 453 the composition is skewed to low complexity; sequence SPVDSLSSSSSSYD. Composition is skewed to basic and acidic residues over residues 454-464 and 475-494; these read GSDREDPRGDF and NTEDRESPSVKRMRMDAWVT.

In terms of assembly, binds DNA as a homo- or heterodimer. Dimerizes with MEF2D. Interacts with HDAC7. Interacts with PIAS1; the interaction enhances sumoylation. Interacts with HDAC4, HDAC9 and SLC2A4RG. Interacts (via the N-terminal) with MAPK7; the interaction results in the phosphorylation and transcriptional activity of MEF2A. In terms of processing, constitutive phosphorylation on Ser-398 promotes Lys-393 sumoylation thus preventing acetylation at this site. Dephosphorylation on Ser-398 by PPP3CA upon neuron depolarization promotes a switch from sumoylation to acetylation on residue Lys-393 leading to inhibition of dendrite claw differentiation. Phosphorylation on Thr-302 and Thr-309 are the main sites involved in p38 MAPK signaling and activate transcription. Phosphorylated on these sites by MAPK14/p38alpha and MAPK11/p38beta, but not by MAPK13/p38delta nor by MAPK12/p38gamma. Phosphorylation on Ser-398 by CDK5 induced by neurotoxicity inhibits MEF2A transcriptional activation leading to apoptosis of cortical neurons. Phosphorylation on Thr-302, Thr-309 and Ser-345 can be induced by EGF. Sumoylation on Lys-393 is enhanced by PIAS1 and represses transcriptional activity. Phosphorylation on Ser-398 is required for sumoylation. Has no effect on nuclear location nor on DNA binding. Sumoylated with SUMO1 and, to a lesser extent with SUMO2 and SUMO3. PIASx facilitates sumoylation in postsynaptic dendrites in the cerebellar cortex and promotes their morphogenesis. Post-translationally, acetylation on Lys-393 activates transcriptional activity. Acetylated by p300 on several sites in diffentiating myocytes. Acetylation on Lys-4 increases DNA binding and transactivation. Hyperacetylation by p300 leads to enhanced cardiac myocyte growth and heart failure. In terms of processing, proteolytically cleaved in cerebellar granule neurons on several sites by caspase 3 and caspase 7 following neurotoxicity. Preferentially cleaves the CDK5-mediated hyperphosphorylated form which leads to neuron apoptosis and transcriptional inactivation.

The protein localises to the nucleus. Functionally, transcriptional activator which binds specifically to the MEF2 element, 5'-YTA[AT](4)TAR-3', found in numerous muscle-specific genes. Also involved in the activation of numerous growth factor- and stress-induced genes. Mediates cellular functions not only in skeletal and cardiac muscle development, but also in neuronal differentiation and survival. Plays diverse roles in the control of cell growth, survival and apoptosis via p38 MAPK signaling in muscle-specific and/or growth factor-related transcription. In cerebellar granule neurons, phosphorylated and sumoylated MEF2A represses transcription of NUR77 promoting synaptic differentiation. Associates with chromatin to the ZNF16 promoter. The polypeptide is Myocyte-specific enhancer factor 2A (MEF2A) (Pongo abelii (Sumatran orangutan)).